Reading from the N-terminus, the 281-residue chain is Dexamethasone-induced Ras-related protein 1 (281 aa).

Cysteine 11 is modified (S-nitrosocysteine). Position 31–38 (31–38 (GSSKVGKT)) interacts with GTP. The short motif at 53 to 61 (YTPTIEDFH) is the Effector region element. Residues 78-82 (DTSGN) and 145-148 (NKGD) each bind GTP. Cysteine 278 is subject to Cysteine methyl ester. Residue cysteine 278 is the site of S-farnesyl cysteine attachment. The propeptide at 279-281 (VIS) is removed in mature form.

Belongs to the small GTPase superfamily. RasD family. Forms a ternary complex with CAPON and NOS1. Component of a complex, at least composed of APBB1, RASD1/DEXRAS1 and APP. Interacts with APBB1/FE65. S-nitrosylation stimulates guanine-nucleotide exchange activity. In terms of tissue distribution, expressed in a variety of tissues including heart, cardiovascular tissues, brain, placenta, lung, liver, skeletal muscle, kidney, pancreas, gastrointestinal and reproductive tissues.

It localises to the cell membrane. Its subcellular location is the cytoplasm. The protein localises to the perinuclear region. The protein resides in the nucleus. In terms of biological role, small GTPase. Negatively regulates the transcription regulation activity of the APBB1/FE65-APP complex via its interaction with APBB1/FE65. The sequence is that of Dexamethasone-induced Ras-related protein 1 (RASD1) from Homo sapiens (Human).